The chain runs to 284 residues: L-ribulose-5-phosphate 3-epimerase UlaE (284 aa).

The protein belongs to the L-ribulose-5-phosphate 3-epimerase family.

It carries out the reaction L-ribulose 5-phosphate = L-xylulose 5-phosphate. The protein operates within cofactor degradation; L-ascorbate degradation; D-xylulose 5-phosphate from L-ascorbate: step 3/4. In terms of biological role, catalyzes the isomerization of L-xylulose-5-phosphate to L-ribulose-5-phosphate. Is involved in the anaerobic L-ascorbate utilization. The polypeptide is L-ribulose-5-phosphate 3-epimerase UlaE (Shigella flexneri serotype 5b (strain 8401)).